The chain runs to 648 residues: Macrolide export ATP-binding/permease protein MacB (648 aa).

One can recognise an ABC transporter domain in the interval 5-243 (LELCNVSRSY…QGVDAAVVNT (239 aa)). Position 41–48 (41–48 (GVSGSGKS)) interacts with ATP. Helical transmembrane passes span 273-293 (LLTM…VVVG), 417-437 (ANVV…IGVA), 523-543 (LFLT…VMNI), 577-597 (VLVC…IAFM), and 611-631 (LTAL…FGWL).

This sequence belongs to the ABC transporter superfamily. Macrolide exporter (TC 3.A.1.122) family. As to quaternary structure, homodimer. Part of the tripartite efflux system MacAB-TolC, which is composed of an inner membrane transporter, MacB, a periplasmic membrane fusion protein, MacA, and an outer membrane component, TolC. The complex forms a large protein conduit and can translocate molecules across both the inner and outer membranes. Interacts with MacA.

The protein localises to the cell inner membrane. In terms of biological role, part of the tripartite efflux system MacAB-TolC. MacB is a non-canonical ABC transporter that contains transmembrane domains (TMD), which form a pore in the inner membrane, and an ATP-binding domain (NBD), which is responsible for energy generation. Confers resistance against macrolides. The protein is Macrolide export ATP-binding/permease protein MacB of Salmonella typhimurium (strain LT2 / SGSC1412 / ATCC 700720).